The primary structure comprises 329 residues: Biotin synthase (329 aa).

The Radical SAM core domain occupies 46-275; sequence YYGNKVKLNM…TKEIRISGGR (230 aa). C64, C68, and C71 together coordinate [4Fe-4S] cluster. [2Fe-2S] cluster is bound by residues C108, C140, C200, and R270.

This sequence belongs to the radical SAM superfamily. Biotin synthase family. In terms of assembly, homodimer. [4Fe-4S] cluster serves as cofactor. [2Fe-2S] cluster is required as a cofactor.

The enzyme catalyses (4R,5S)-dethiobiotin + (sulfur carrier)-SH + 2 reduced [2Fe-2S]-[ferredoxin] + 2 S-adenosyl-L-methionine = (sulfur carrier)-H + biotin + 2 5'-deoxyadenosine + 2 L-methionine + 2 oxidized [2Fe-2S]-[ferredoxin]. Its pathway is cofactor biosynthesis; biotin biosynthesis; biotin from 7,8-diaminononanoate: step 2/2. Functionally, catalyzes the conversion of dethiobiotin (DTB) to biotin by the insertion of a sulfur atom into dethiobiotin via a radical-based mechanism. The sequence is that of Biotin synthase from Anoxybacillus flavithermus (strain DSM 21510 / WK1).